The primary structure comprises 264 residues: Ribosome-recycling factor, mitochondrial (264 aa).

Belongs to the RRF family.

It is found in the mitochondrion. In terms of biological role, necessary for protein synthesis in mitochondria. Functions as a ribosome recycling factor in mitochondria. This chain is Ribosome-recycling factor, mitochondrial (RRF1), found in Yarrowia lipolytica (strain CLIB 122 / E 150) (Yeast).